The sequence spans 358 residues: Probable branched-chain-amino-acid aminotransferase (358 aa).

K196 bears the N6-(pyridoxal phosphate)lysine mark.

It belongs to the class-IV pyridoxal-phosphate-dependent aminotransferase family. It depends on pyridoxal 5'-phosphate as a cofactor.

It carries out the reaction L-leucine + 2-oxoglutarate = 4-methyl-2-oxopentanoate + L-glutamate. It catalyses the reaction L-isoleucine + 2-oxoglutarate = (S)-3-methyl-2-oxopentanoate + L-glutamate. The enzyme catalyses L-valine + 2-oxoglutarate = 3-methyl-2-oxobutanoate + L-glutamate. It functions in the pathway amino-acid biosynthesis; L-isoleucine biosynthesis; L-isoleucine from 2-oxobutanoate: step 4/4. It participates in amino-acid biosynthesis; L-leucine biosynthesis; L-leucine from 3-methyl-2-oxobutanoate: step 4/4. The protein operates within amino-acid biosynthesis; L-valine biosynthesis; L-valine from pyruvate: step 4/4. Acts on leucine, isoleucine and valine. This is Probable branched-chain-amino-acid aminotransferase (ilvE) from Staphylococcus aureus (strain N315).